The following is a 444-amino-acid chain: Protein kinase C and casein kinase substrate in neurons protein 1 (444 aa).

2 positions are modified to phosphoserine: Ser2 and Ser79. One can recognise an F-BAR domain in the interval 13 to 283 (EETTDSFWEV…AIRGADAQED (271 aa)). Positions 26–275 (KRTVKRIDDG…HVYRELEQAI (250 aa)) form a coiled coil. Disordered regions lie at residues 175-194 (MNSK…LQDK) and 309-386 (LPHT…DDSK). Phosphothreonine is present on Thr184. Over residues 314–324 (TKKEKQPKKAE) the composition is skewed to basic and acidic residues. Residues 329–351 (TNATGAVESTSQAGDRGSVSSYD) show a composition bias toward polar residues. Phosphoserine occurs at positions 346, 348, 349, 361, and 365. The SH3 domain maps to 385–444 (SKGVRVRALYDYDGQEQDELSFKAGDELTKLGEEDEQGWCRGRLDSGQLGLYPANYVEAI). Residue Tyr394 is modified to Phosphotyrosine. Phosphoserine is present on residues Ser405 and Ser430.

Belongs to the PACSIN family. In terms of assembly, may form heterooligomers with other PACSINs. Interacts with MAPT. Interacts with TRPV4. Interacts (via SH3 domain) with SYNJ1 and WASL. Interacts with DNM2 and DNM3. Interacts with both COBL and DBNL. Identified in a complex composed of COBL, PACSIN1 and WASL. Interacts with EHD1 and EHD3. Homodimer. Interacts (via SH3 domain) with DNM1; the interaction is reduced by DNM1 phosphorylation. In terms of processing, phosphorylated by casein kinase 2 (CK2) and protein kinase C (PKC). As to expression, highly expressed in brain and, at much lower levels, in heart and pancreas.

The protein localises to the cytoplasm. The protein resides in the cell projection. It is found in the synapse. Its subcellular location is the synaptosome. It localises to the ruffle membrane. The protein localises to the membrane. The protein resides in the cytoplasmic vesicle membrane. It is found in the cytosol. Its subcellular location is the cell membrane. Functionally, plays a role in the reorganization of the microtubule cytoskeleton via its interaction with MAPT; this decreases microtubule stability and inhibits MAPT-induced microtubule polymerization. Plays a role in cellular transport processes by recruiting DNM1, DNM2 and DNM3 to membranes. Plays a role in the reorganization of the actin cytoskeleton and in neuron morphogenesis via its interaction with COBL and WASL, and by recruiting COBL to the cell cortex. Plays a role in the regulation of neurite formation, neurite branching and the regulation of neurite length. Required for normal synaptic vesicle endocytosis; this process retrieves previously released neurotransmitters to accommodate multiple cycles of neurotransmission. Required for normal excitatory and inhibitory synaptic transmission. Binds to membranes via its F-BAR domain and mediates membrane tubulation. In Homo sapiens (Human), this protein is Protein kinase C and casein kinase substrate in neurons protein 1 (PACSIN1).